The following is a 209-amino-acid chain: Thiamine-phosphate synthase (209 aa).

4-amino-2-methyl-5-(diphosphooxymethyl)pyrimidine is bound by residues 36-40 (QLRDK) and N68. Mg(2+) is bound by residues D69 and D88. Position 107 (S107) interacts with 4-amino-2-methyl-5-(diphosphooxymethyl)pyrimidine. A 2-[(2R,5Z)-2-carboxy-4-methylthiazol-5(2H)-ylidene]ethyl phosphate-binding site is contributed by 133–135 (TNS). K136 contributes to the 4-amino-2-methyl-5-(diphosphooxymethyl)pyrimidine binding site. 2-[(2R,5Z)-2-carboxy-4-methylthiazol-5(2H)-ylidene]ethyl phosphate is bound by residues G164 and 184–185 (IT).

Belongs to the thiamine-phosphate synthase family. Requires Mg(2+) as cofactor.

The catalysed reaction is 2-[(2R,5Z)-2-carboxy-4-methylthiazol-5(2H)-ylidene]ethyl phosphate + 4-amino-2-methyl-5-(diphosphooxymethyl)pyrimidine + 2 H(+) = thiamine phosphate + CO2 + diphosphate. It catalyses the reaction 2-(2-carboxy-4-methylthiazol-5-yl)ethyl phosphate + 4-amino-2-methyl-5-(diphosphooxymethyl)pyrimidine + 2 H(+) = thiamine phosphate + CO2 + diphosphate. It carries out the reaction 4-methyl-5-(2-phosphooxyethyl)-thiazole + 4-amino-2-methyl-5-(diphosphooxymethyl)pyrimidine + H(+) = thiamine phosphate + diphosphate. The protein operates within cofactor biosynthesis; thiamine diphosphate biosynthesis; thiamine phosphate from 4-amino-2-methyl-5-diphosphomethylpyrimidine and 4-methyl-5-(2-phosphoethyl)-thiazole: step 1/1. Functionally, condenses 4-methyl-5-(beta-hydroxyethyl)thiazole monophosphate (THZ-P) and 2-methyl-4-amino-5-hydroxymethyl pyrimidine pyrophosphate (HMP-PP) to form thiamine monophosphate (TMP). The protein is Thiamine-phosphate synthase of Shouchella clausii (strain KSM-K16) (Alkalihalobacillus clausii).